Here is a 28-residue protein sequence, read N- to C-terminus: Putative GDSL-motif lipase/hydrolase-like protein (28 aa).

It belongs to the 'GDSL' lipolytic enzyme family.

This Populus euphratica (Euphrates poplar) protein is Putative GDSL-motif lipase/hydrolase-like protein.